A 67-amino-acid polypeptide reads, in one-letter code: Teratocyte protein CftICK-II (67 aa).

An N-terminal signal peptide occupies residues 1-25 (MVKSLLFAIGYLIFLLVTRVNVINA). Intrachain disulfides connect Cys-28–Cys-42, Cys-35–Cys-46, and Cys-41–Cys-57.

Abundantly expressed by teratocytes, which are extra-embryonic cells released by parasitoid wasps into their hosts during larval eclosion.

Its subcellular location is the secreted. Its function is as follows. This endoparasitoid wasp peptide has immununosuppressive, antimicrobial and insecticidal activities. Suppress cellular immunity which is detectable as a reduction of hemocyte encapsulation in the host. Shows moderate antifungal activity against C.albicans (MIC=4 ug/ml). In vivo, ingestion of this peptide (probably at excessive doses) increases larval mortality and reduces leaf consumption of D.saccharalis, a permissive host for C.flavipes. In Cotesia flavipes (Parasitic wasp), this protein is Teratocyte protein CftICK-II.